The primary structure comprises 95 residues: Putative septation protein SpoVG (95 aa).

Belongs to the SpoVG family.

Could be involved in septation. In Clostridium botulinum (strain ATCC 19397 / Type A), this protein is Putative septation protein SpoVG.